Reading from the N-terminus, the 567-residue chain is TPR repeat-containing protein MJ1428 (567 aa).

TPR repeat units lie at residues 14 to 47, 48 to 81, 83 to 115, 116 to 148, 150 to 183, 199 to 234, 236 to 268, 269 to 301, 303 to 335, 344 to 379, 380 to 412, 414 to 446, and 505 to 538; these read YEDW…KNTN, PIDW…SPSN, YFAY…IKNE, ELFE…ANSK, LNAL…NPSH, INSY…DENS, ISYY…FNRS, LYYA…NSQN, YAYF…YLEE, LNLY…ENSS, RWWY…NPKD, STLK…VNSL, and AYIY…EMYR.

This is TPR repeat-containing protein MJ1428 from Methanocaldococcus jannaschii (strain ATCC 43067 / DSM 2661 / JAL-1 / JCM 10045 / NBRC 100440) (Methanococcus jannaschii).